Reading from the N-terminus, the 714-residue chain is Fatty acid oxidation complex subunit alpha (714 aa).

Positions 1–190 (MEMASAFTLN…KLGLVDDVVP (190 aa)) are enoyl-CoA hydratase. The 3-hydroxyacyl-CoA dehydrogenase stretch occupies residues 306-714 (APLNSVGILG…FWKTTATDLQ (409 aa)).

This sequence in the N-terminal section; belongs to the enoyl-CoA hydratase/isomerase family. It in the central section; belongs to the 3-hydroxyacyl-CoA dehydrogenase family. Heterotetramer of two alpha chains (FadJ) and two beta chains (FadI).

Its subcellular location is the cytoplasm. It catalyses the reaction a (3S)-3-hydroxyacyl-CoA = a (2E)-enoyl-CoA + H2O. The enzyme catalyses a 4-saturated-(3S)-3-hydroxyacyl-CoA = a (3E)-enoyl-CoA + H2O. The catalysed reaction is a (3S)-3-hydroxyacyl-CoA + NAD(+) = a 3-oxoacyl-CoA + NADH + H(+). It carries out the reaction (3S)-3-hydroxybutanoyl-CoA = (3R)-3-hydroxybutanoyl-CoA. The protein operates within lipid metabolism; fatty acid beta-oxidation. Its function is as follows. Catalyzes the formation of a hydroxyacyl-CoA by addition of water on enoyl-CoA. Also exhibits 3-hydroxyacyl-CoA epimerase and 3-hydroxyacyl-CoA dehydrogenase activities. The protein is Fatty acid oxidation complex subunit alpha of Escherichia coli O17:K52:H18 (strain UMN026 / ExPEC).